The sequence spans 93 residues: Small ribosomal subunit protein uS19c (93 aa).

Belongs to the universal ribosomal protein uS19 family.

Its subcellular location is the plastid. The protein localises to the chloroplast. Functionally, protein S19 forms a complex with S13 that binds strongly to the 16S ribosomal RNA. This chain is Small ribosomal subunit protein uS19c, found in Oryza nivara (Indian wild rice).